Reading from the N-terminus, the 268-residue chain is Ribosomal RNA small subunit methyltransferase A (268 aa).

S-adenosyl-L-methionine is bound by residues Asn-17, Leu-19, Gly-44, Glu-65, Asp-89, and Asn-110.

Belongs to the class I-like SAM-binding methyltransferase superfamily. rRNA adenine N(6)-methyltransferase family. RsmA subfamily.

It localises to the cytoplasm. The enzyme catalyses adenosine(1518)/adenosine(1519) in 16S rRNA + 4 S-adenosyl-L-methionine = N(6)-dimethyladenosine(1518)/N(6)-dimethyladenosine(1519) in 16S rRNA + 4 S-adenosyl-L-homocysteine + 4 H(+). Its function is as follows. Specifically dimethylates two adjacent adenosines (A1518 and A1519) in the loop of a conserved hairpin near the 3'-end of 16S rRNA in the 30S particle. May play a critical role in biogenesis of 30S subunits. In Acidithiobacillus ferrooxidans (strain ATCC 53993 / BNL-5-31) (Leptospirillum ferrooxidans (ATCC 53993)), this protein is Ribosomal RNA small subunit methyltransferase A.